The sequence spans 243 residues: MTKLAQLKLYATRPHPCSYLDDQEATTVFIDPNATIDASLYSELSAYGFRRSGSHVYRPHCEQCQACIPIRVCADSFTPNRSQKRCLKLNADLVVSEHDSIDNEECFSLYERYINERHSDGDMYPADKTQYRDFLTSEWGITRFLLFRDAQQSLLAVAVVDRLENGLSAVYTFFDPDAEKRSLGRFAILYQLEQAKQQQLPYLYLGYWIRACTKMNYKTDYQPYQMLINQNWVNIDVSSVIKR.

Belongs to the R-transferase family. Bpt subfamily.

Its subcellular location is the cytoplasm. The enzyme catalyses N-terminal L-glutamyl-[protein] + L-leucyl-tRNA(Leu) = N-terminal L-leucyl-L-glutamyl-[protein] + tRNA(Leu) + H(+). The catalysed reaction is N-terminal L-aspartyl-[protein] + L-leucyl-tRNA(Leu) = N-terminal L-leucyl-L-aspartyl-[protein] + tRNA(Leu) + H(+). Functions in the N-end rule pathway of protein degradation where it conjugates Leu from its aminoacyl-tRNA to the N-termini of proteins containing an N-terminal aspartate or glutamate. In Teredinibacter turnerae (strain ATCC 39867 / T7901), this protein is Aspartate/glutamate leucyltransferase.